Reading from the N-terminus, the 644-residue chain is MSKVYLNSDMINHLNSTVQAYFNLWLEKQNAIMRSQPQIIQDNQKLIGITTLVASIFTLYVLVKIISTPAKCSSSYKPVKFSLPAPEAAQNNWKGKRSVSTNIWNPEEPNFIQCHCPATGQYLGSFPSKTEADIDEMVSKAGKAQSTWGNSDFSRRLRVLASLHDYILNNQDLIARVACRDSGKTMLDASMGEILVTLEKIQWTIKHGQRALQPSRRPGPTNFFMKWYKGAEIRYEPLGVISSIVSWNYPFHNLLGPIIAALFTGNAIVVKCSEQVVWSSEFFVELIRKCLEACDEDPDLVQLCYCLPPTENDDSANYFTSHPGFKHITFIGSQPVAHYILKCAAKSLTPVVVELGGKDAFIVLDSAKNLDALSSIIMRGTFQSSGQNCIGIERVIVSKENYDDLVKILNDRMTANPLRQGSDIDHLENVDMGAMISDNRFDELEALVKDAVAKGARLLQGGSRFKHPKYPQGHYFQPTLLVDVTPEMKIAQNEVFGPILVMMKAKNTDHCVQLANSAPFGLGGSVFGADIKECNYVANSLQTGNVAINDFATFYVCQLPFGGINGSGYGKFGGEEGLLGLCNAKSVCFDTLPFVSTQIPKPLDYPIRNNAKAWNFVKSFIVGAYTNSTWQRIKSLFSLAKEAS.

Asn15 carries N-linked (GlcNAc...) asparagine glycosylation. Glu354 acts as the Proton acceptor in catalysis. Catalysis depends on Cys389, which acts as the Nucleophile. N-linked (GlcNAc...) asparagine glycosylation is found at Asn565 and Asn627.

This sequence belongs to the aldehyde dehydrogenase family. N-glycosylated.

The protein localises to the endoplasmic reticulum. The polypeptide is Putative aldehyde dehydrogenase-like protein YHR039C (MSC7) (Saccharomyces cerevisiae (strain ATCC 204508 / S288c) (Baker's yeast)).